The following is a 67-amino-acid chain: DNA-directed RNA polymerase subunit omega (67 aa).

The protein belongs to the RNA polymerase subunit omega family. In terms of assembly, the RNAP catalytic core consists of 2 alpha, 1 beta, 1 beta' and 1 omega subunit. When a sigma factor is associated with the core the holoenzyme is formed, which can initiate transcription.

It carries out the reaction RNA(n) + a ribonucleoside 5'-triphosphate = RNA(n+1) + diphosphate. Promotes RNA polymerase assembly. Latches the N- and C-terminal regions of the beta' subunit thereby facilitating its interaction with the beta and alpha subunits. The protein is DNA-directed RNA polymerase subunit omega of Exiguobacterium sibiricum (strain DSM 17290 / CCUG 55495 / CIP 109462 / JCM 13490 / 255-15).